Here is a 37-residue protein sequence, read N- to C-terminus: Large ribosomal subunit protein bL36A (37 aa).

Belongs to the bacterial ribosomal protein bL36 family.

The sequence is that of Large ribosomal subunit protein bL36A from Methylobacillus flagellatus (strain ATCC 51484 / DSM 6875 / VKM B-1610 / KT).